Reading from the N-terminus, the 478-residue chain is MNRDSFYPAIACFPLLLMLAGCAPMHETRQALSQQTPAAQVDTALPTALKNGWPDSQWWLEYHDNQLTSLINNALQSAPDMQVAEQRIQLAEAQAKAVATQDGPQLDFSADMERQKMSAEGLMGPFALNDPAAGTTGPWYTNGTFGLTAGWHLDIWGKNRAEITARLGTVKARAAEREQTRQLLAGSVARLYWEWQTQAALNTVLQQIEKEQNTIIATDRQLYQNGITSSVEGVETDINASKTRQQLNDVAGKMKIIEARLNALTNHQTKSLKLKTVALPKVASQLPDELGYSLLARRADLQAAHWYVESSLSTIDAAKAAFYPDINLMAFLQQDALHLSDLFRHSAQQMGVTAGLTLPIFDSGRLNANLDIAKAESNLSIASYNKAVVEAVNDVARAASQVQTLAEKNQHQAQIERDALRVVGLAQARFNAGLIAGSRVSEARIPALRERANGLLLQGQWLDASIQLTGALGGGYKR.

Residues 1–21 (MNRDSFYPAIACFPLLLMLAG) form the signal peptide. Residue C22 is the site of N-palmitoyl cysteine attachment. The S-diacylglycerol cysteine moiety is linked to residue C22.

Belongs to the outer membrane factor (OMF) (TC 1.B.17) family.

The protein resides in the cell outer membrane. Could be involved in resistance to puromycin, acriflavine and tetraphenylarsonium chloride. In Escherichia coli O6:H1 (strain CFT073 / ATCC 700928 / UPEC), this protein is Multidrug resistance outer membrane protein MdtQ (mdtQ).